We begin with the raw amino-acid sequence, 197 residues long: Protein Hikeshi (197 aa).

Residues 18–55 (VAEDKFVFDLPDYENINHVVVFMLGTVPFPEGMGGSVY) are required for F-X-F-G repeats-nucleoporins recognition and nuclear import. Positions 124 to 134 (QTPVGNAAVSS) are flexible linker region involved in nuclear import of HSP70 proteins.

It belongs to the OPI10 family. As to quaternary structure, forms an asymmetric homodimer; required for binding and nuclear import of HSP70 proteins. Interacts with ATP-bound HSP70 proteins. Interacts with NUP62 and NUP153 (via F-X-F-G repeats). Interacts with HSPA8.

It is found in the cytoplasm. Its subcellular location is the cytosol. The protein localises to the nucleus. Its function is as follows. Acts as a specific nuclear import carrier for HSP70 proteins following heat-shock stress: acts by mediating the nucleoporin-dependent translocation of ATP-bound HSP70 proteins into the nucleus. HSP70 proteins import is required to protect cells from heat shock damages. Does not translocate ADP-bound HSP70 proteins into the nucleus. The chain is Protein Hikeshi from Bos taurus (Bovine).